The following is a 20-amino-acid chain: Ranalexin-1Ca (20 aa).

Cysteines 14 and 20 form a disulfide.

Expressed by the skin glands.

Its subcellular location is the secreted. Its function is as follows. Antibacterial activity against Gram-positive bacterium S.aureus (MIC=17 uM) and Gram-negative bacterium E.coli (MIC=4 uM). Has activity against C.albicans (MIC=14 uM). The sequence is that of Ranalexin-1Ca from Lithobates clamitans (Green frog).